Consider the following 865-residue polypeptide: Alanine--tRNA ligase (865 aa).

Residues histidine 552, histidine 556, cysteine 654, and histidine 658 each contribute to the Zn(2+) site.

Belongs to the class-II aminoacyl-tRNA synthetase family. Zn(2+) is required as a cofactor.

The protein resides in the cytoplasm. The enzyme catalyses tRNA(Ala) + L-alanine + ATP = L-alanyl-tRNA(Ala) + AMP + diphosphate. In terms of biological role, catalyzes the attachment of alanine to tRNA(Ala) in a two-step reaction: alanine is first activated by ATP to form Ala-AMP and then transferred to the acceptor end of tRNA(Ala). Also edits incorrectly charged Ser-tRNA(Ala) and Gly-tRNA(Ala) via its editing domain. This chain is Alanine--tRNA ligase, found in Coxiella burnetii (strain RSA 331 / Henzerling II).